Consider the following 259-residue polypeptide: uncharacterized protein (259 aa).

A coiled-coil region spans residues 158-187; that stretch reads VELHLKIIEEDMKETTKKNKEKKQNSQSQE. Residues 172–181 are compositionally biased toward basic and acidic residues; the sequence is TTKKNKEKKQ. Disordered stretches follow at residues 172 to 197 and 217 to 240; these read TTKK…MEVS and PVKK…QLSK. Composition is skewed to low complexity over residues 182–193 and 217–226; these read NSQSQEISNSIE and PVKKTSSASK.

This is an uncharacterized protein from Acanthamoeba polyphaga mimivirus (APMV).